We begin with the raw amino-acid sequence, 102 residues long: MSDQEAKPSSEDLGDKKEGGDYIKLKVIGQDSSEIHFKVKMTTHLKKLKESYCQRQGVPMNSLRFLFEGQRISDHQTPKELGMEEEDVIEVYQEQTGGHSTI.

The Ubiquitin-like domain maps to 21–98 (DYIKLKVIGQ…IEVYQEQTGG (78 aa)). G98 participates in a covalent cross-link: Glycyl lysine isopeptide (Gly-Lys) (interchain with K-? in acceptor proteins). The propeptide occupies 99–102 (HSTI).

Belongs to the ubiquitin family. SUMO subfamily. As to quaternary structure, interacts with sae2, ube2i, ranbp2, pias1 and pias2. Interacts with sox9 and sox10. Covalently attached to a number of proteins. Cleavage of precursor form by a sentrin-specific protease is necessary for function.

It is found in the nucleus membrane. Its subcellular location is the nucleus speckle. The protein localises to the cytoplasm. It localises to the nucleus. The protein resides in the PML body. It is found in the cell membrane. Functionally, ubiquitin-like protein that can be covalently attached to proteins as a monomer or a lysine-linked polymer. Covalent attachment via an isopeptide bond to its substrates requires prior activation by the E1 complex sae1-sae2 and linkage to the E2 enzyme ube2i. This post-translational modification on lysine residues of proteins plays a crucial role in a number of cellular processes such as nuclear transport, DNA replication and repair, mitosis and signal transduction. Polymeric sumo1 chains are also susceptible to polyubiquitination which functions as a signal for proteasomal degradation of modified proteins. This chain is Small ubiquitin-related modifier 1 (sumo1), found in Xenopus tropicalis (Western clawed frog).